The sequence spans 393 residues: Nucleoside permease NupC (393 aa).

The next 9 membrane-spanning stretches (helical) occupy residues 3 to 23 (YLIG…ASSG), 32 to 52 (IVVM…TGIG), 87 to 107 (TTFF…IGIL), 168 to 188 (LCAS…MTML), 191 to 211 (EYVV…ASII), 249 to 269 (VVVA…NGIF), 272 to 292 (VFGI…AFLV), 334 to 354 (AIVS…IIAG), and 372 to 392 (LKLL…VGLI).

It belongs to the concentrative nucleoside transporter (CNT) (TC 2.A.41) family.

The protein localises to the cell membrane. In terms of biological role, transport of the pyrimidine nucleoside uridine. The chain is Nucleoside permease NupC from Bacillus subtilis (strain 168).